The sequence spans 370 residues: MALLSAAPRALRLPRRLPLGAALPALRALATPAAAQKVPVSLIAALRKQHPVPLAQAREALERSGLDLAAALDYLRTSTSASAEKKAAKVSGRDTNEGLIAISLLGGKRVGMIHLACETDFVARNQVFLDTARGVAETTAFLDVPGDHEKPQIASSPYAFDPILDFPTESLLSAPLISLPAADTADGSLSPLPTSEPTTIKQSLLSSLAQTGENLKLLRAVSFAAPFPSTPDVRFVPGGYAHGGITDKEGKVGGIVVLSVTSADPEKPIASIIHGPGGDDLEKAAESLARTVARQVVGFPTKVIDRGDRAVDDEEVLMEQPFMMFNGDSRSVKDVLAEWGKERGVVLRVVGMRRWAVGDEIEIKEKETDA.

The N-terminal 29 residues, 1 to 29 (MALLSAAPRALRLPRRLPLGAALPALRAL), are a transit peptide targeting the mitochondrion.

Belongs to the EF-Ts family.

The protein localises to the mitochondrion. In terms of biological role, associates with the EF-Tu.GDP complex and induces the exchange of GDP to GTP. It remains bound to the aminoacyl-tRNA.EF-Tu.GTP complex up to the GTP hydrolysis stage on the ribosome. In Cryptococcus neoformans var. neoformans serotype D (strain B-3501A) (Filobasidiella neoformans), this protein is Elongation factor Ts, mitochondrial.